Reading from the N-terminus, the 511-residue chain is GMP synthase [glutamine-hydrolyzing] (511 aa).

In terms of domain architecture, Glutamine amidotransferase type-1 spans 5–195; it reads MILVLDFGGQ…LYNICGCKGD (191 aa). The active-site Nucleophile is the Cys-82. Residues His-169 and Glu-171 contribute to the active site. The region spanning 196 to 386 is the GMPS ATP-PPase domain; sequence WKMSSFVENS…LGIPEDLVWR (191 aa). 223-229 is an ATP binding site; the sequence is SGGVDSS.

In terms of assembly, homodimer.

It catalyses the reaction XMP + L-glutamine + ATP + H2O = GMP + L-glutamate + AMP + diphosphate + 2 H(+). Its pathway is purine metabolism; GMP biosynthesis; GMP from XMP (L-Gln route): step 1/1. In terms of biological role, catalyzes the synthesis of GMP from XMP. The chain is GMP synthase [glutamine-hydrolyzing] from Ruminiclostridium cellulolyticum (strain ATCC 35319 / DSM 5812 / JCM 6584 / H10) (Clostridium cellulolyticum).